Consider the following 515-residue polypeptide: Maturase K (515 aa).

The protein belongs to the intron maturase 2 family. MatK subfamily.

The protein localises to the plastid. The protein resides in the chloroplast. In terms of biological role, usually encoded in the trnK tRNA gene intron. Probably assists in splicing its own and other chloroplast group II introns. The chain is Maturase K from Pinus halepensis (Aleppo pine).